The following is a 124-amino-acid chain: Glucagon-1 (124 aa).

The N-terminal stretch at 1-25 (MKRIHSLAGILLVLGLIQSSCRVLM) is a signal peptide. Residues 28–54 (ADPSSSLEADSTLKDEPRELSNMKRHS) are disordered. Basic and acidic residues predominate over residues 38–54 (STLKDEPRELSNMKRHS). Positions 84–88 (SGVAE) are excised as a propeptide.

The protein belongs to the glucagon family.

It is found in the secreted. Its function is as follows. Glucagon plays a key role in glucose metabolism and homeostasis. Regulates blood glucose by increasing gluconeogenesis and decreasing glycolysis. The chain is Glucagon-1 (gcg1) from Lophius americanus (American angler).